The chain runs to 427 residues: Dihydroorotase (427 aa).

Zn(2+) contacts are provided by H57 and H59. Residues 59–61 and N91 contribute to the substrate site; that span reads HLR. Zn(2+)-binding residues include D149, H176, and H229. N275 contacts substrate. D302 lines the Zn(2+) pocket. The active site involves D302. Residues H306 and 320 to 321 contribute to the substrate site; that span reads FG.

Belongs to the metallo-dependent hydrolases superfamily. DHOase family. Class I DHOase subfamily. Zn(2+) is required as a cofactor.

The catalysed reaction is (S)-dihydroorotate + H2O = N-carbamoyl-L-aspartate + H(+). It participates in pyrimidine metabolism; UMP biosynthesis via de novo pathway; (S)-dihydroorotate from bicarbonate: step 3/3. Its function is as follows. Catalyzes the reversible cyclization of carbamoyl aspartate to dihydroorotate. The chain is Dihydroorotase from Shouchella clausii (strain KSM-K16) (Alkalihalobacillus clausii).